We begin with the raw amino-acid sequence, 515 residues long: Fatty acyl-CoA reductase 2 (515 aa).

Residues 1–464 are Cytoplasmic-facing; it reads MSMIAAFYSN…KAKQHLRRLR (464 aa). Residues 465-484 form a helical membrane-spanning segment; sequence NIHYLFNTALFLIIWRLLIA. Residues 485-515 are Peroxisomal-facing; sequence RSQMARNVWFFIVSFCYKFISYFRASSTLKV.

It belongs to the fatty acyl-CoA reductase family. As to expression, specifically expressed in the meibomian glands of the eyelid and the sebaceous glands of the skin. Also expressed in the brain where large quantities of ether lipids are synthesized.

It localises to the peroxisome membrane. The enzyme catalyses a long-chain fatty acyl-CoA + 2 NADPH + 2 H(+) = a long-chain primary fatty alcohol + 2 NADP(+) + CoA. The catalysed reaction is hexadecanoyl-CoA + 2 NADPH + 2 H(+) = hexadecan-1-ol + 2 NADP(+) + CoA. It carries out the reaction octadecanoyl-CoA + 2 NADPH + 2 H(+) = octadecan-1-ol + 2 NADP(+) + CoA. It catalyses the reaction a very long-chain fatty acyl-CoA + 2 NADPH + 2 H(+) = a very long-chain primary fatty alcohol + 2 NADP(+) + CoA. The enzyme catalyses an ultra-long-chain fatty acyl-CoA + 2 NADPH + 2 H(+) = an ultra long-chain primary fatty alcohol + 2 NADP(+) + CoA. The catalysed reaction is eicosanoyl-CoA + 2 NADPH + 2 H(+) = eicosan-1-ol + 2 NADP(+) + CoA. It carries out the reaction docosanoyl-CoA + 2 NADPH + 2 H(+) = docosan-1-ol + 2 NADP(+) + CoA. It catalyses the reaction tetracosanoyl-CoA + 2 NADPH + 2 H(+) = tetracosan-1-ol + 2 NADP(+) + CoA. The enzyme catalyses hexacosanoyl-CoA + 2 NADPH + 2 H(+) = hexacosan-1-ol + 2 NADP(+) + CoA. The catalysed reaction is octacosanoyl-CoA + 2 NADPH + 2 H(+) = octacosan-1-ol + 2 NADP(+) + CoA. It carries out the reaction triacontanoyl-CoA + 2 NADPH + 2 H(+) = triacontan-1-ol + 2 NADP(+) + CoA. It catalyses the reaction 18-methylnonadecanoyl-CoA + 2 NADPH + 2 H(+) = 18-methylnonadecan-1-ol + 2 NADP(+) + CoA. The enzyme catalyses 20-methylheneicosanoyl-CoA + 2 NADPH + 2 H(+) = 20-methylheneicosan-1-ol + 2 NADP(+) + CoA. The catalysed reaction is 22-methyltricosanoyl-CoA + 2 NADPH + 2 H(+) = 22-methyltricosan-1-ol + 2 NADP(+) + CoA. It carries out the reaction 24-methylpentacosanoyl-CoA + 2 NADPH + 2 H(+) = 24-methylpentacosan-1-ol + 2 NADP(+) + CoA. Functionally, catalyzes the reduction of saturated but not unsaturated C16 or C18 fatty acyl-CoA to fatty alcohols. A lower activity can be observed with shorter fatty acyl-CoA substrates. Can produce very long-chain and ultra long-chain FAls, regardless of whether they have a straight or branched chain. It may play a role in the production of ether lipids/plasmalogens and wax monoesters which synthesis requires fatty alcohols as substrates. In Mus musculus (Mouse), this protein is Fatty acyl-CoA reductase 2.